The following is a 171-amino-acid chain: uncharacterized protein (171 aa).

In terms of domain architecture, HTH marR-type spans 33-166; the sequence is AISIATNLYR…LTGLLRKVAD (134 aa). A DNA-binding region (H-T-H motif) is located at residues 80-103; the sequence is TRKIAELSGISTATASNVIKTLEK.

This is an uncharacterized protein from Bacillus subtilis (strain 168).